The sequence spans 290 residues: MKGKIIKGIAGFYYVKVEENLIECKARGKFRHKDVKPMVGDNVVIQVENGKGVIESIEKRSSELLRPAVANISLAFVVFAIKSPDINFDLLNKFLVLCEYNHIEAIVCLNKVDLVSEEERENVKKRINDIGYEVLYINAKEGLGTDILKEKINGNITVLCGPSGAGKSTLINKLTNKEHMLTGIVSEKIGRGKHTTRHSELIEVSNGYIVDTPGFSTLEIKELMNKEDLKYCFPEFEEHNESCKYRGCLHNKEPKCTVKQAVEEGKINKYRYEFYIKTLEEIIEGEKNKW.

One can recognise a CP-type G domain in the interval 61-218 (SSELLRPAVA…IVDTPGFSTL (158 aa)). Residues 110–113 (NKVD) and 161–169 (GPSGAGKST) each bind GTP. Zn(2+)-binding residues include Cys-243, Cys-248, His-250, and Cys-256.

It belongs to the TRAFAC class YlqF/YawG GTPase family. RsgA subfamily. In terms of assembly, monomer. Associates with 30S ribosomal subunit, binds 16S rRNA. Zn(2+) serves as cofactor.

It is found in the cytoplasm. In terms of biological role, one of several proteins that assist in the late maturation steps of the functional core of the 30S ribosomal subunit. Helps release RbfA from mature subunits. May play a role in the assembly of ribosomal proteins into the subunit. Circularly permuted GTPase that catalyzes slow GTP hydrolysis, GTPase activity is stimulated by the 30S ribosomal subunit. In Clostridium botulinum (strain Eklund 17B / Type B), this protein is Small ribosomal subunit biogenesis GTPase RsgA.